The primary structure comprises 142 residues: Large ribosomal subunit protein uL13 (142 aa).

This sequence belongs to the universal ribosomal protein uL13 family. Part of the 50S ribosomal subunit.

Its function is as follows. This protein is one of the early assembly proteins of the 50S ribosomal subunit, although it is not seen to bind rRNA by itself. It is important during the early stages of 50S assembly. This is Large ribosomal subunit protein uL13 from Cupriavidus metallidurans (strain ATCC 43123 / DSM 2839 / NBRC 102507 / CH34) (Ralstonia metallidurans).